A 296-amino-acid polypeptide reads, in one-letter code: NAD kinase (296 aa).

Asp73 serves as the catalytic Proton acceptor. NAD(+) is bound by residues 73–74 (DG), Lys78, 151–152 (NE), Arg178, Asp180, and 191–196 (TAHAMS).

The protein belongs to the NAD kinase family. Requires a divalent metal cation as cofactor.

It is found in the cytoplasm. The enzyme catalyses NAD(+) + ATP = ADP + NADP(+) + H(+). Involved in the regulation of the intracellular balance of NAD and NADP, and is a key enzyme in the biosynthesis of NADP. Catalyzes specifically the phosphorylation on 2'-hydroxyl of the adenosine moiety of NAD to yield NADP. In Francisella tularensis subsp. holarctica (strain FTNF002-00 / FTA), this protein is NAD kinase.